A 1082-amino-acid chain; its full sequence is M cell-type agglutination protein mam3 (1082 aa).

Positions 1 to 18 are cleaved as a signal peptide; that stretch reads MSIALAFFILVLLGFSWA. Asparagine 28, asparagine 56, and asparagine 82 each carry an N-linked (GlcNAc...) asparagine glycan. The segment at 353 to 374 is disordered; sequence TSSSSTDQLTSASPISSSVISP. Asparagine 451, asparagine 475, asparagine 495, asparagine 520, asparagine 548, asparagine 588, asparagine 613, and asparagine 638 each carry an N-linked (GlcNAc...) asparagine glycan. 11 tandem repeats follow at residues 646–681, 682–717, 718–753, 754–789, 790–825, 826–861, 862–897, 898–933, 934–969, 970–1005, and 1006–1041. Positions 720–1043 are 11 X 36 AA approximate tandem repeats; that stretch reads VTETVTSGSI…VLVDIPQQHA (324 aa).

The protein belongs to the mam3/map4 family.

It is found in the cell surface. Functionally, m cell-type specific protein involved in agglutination during conjugation. The protein is M cell-type agglutination protein mam3 of Schizosaccharomyces pombe (strain 972 / ATCC 24843) (Fission yeast).